Reading from the N-terminus, the 923-residue chain is RNA polymerase-associated protein RapA (923 aa).

Positions 162–332 (EVGNRVNPRV…FARLRLLDPE (171 aa)) constitute a Helicase ATP-binding domain. ATP is bound at residue 175–182 (DEVGLGKT). The DEAH box motif lies at 278–281 (DEAH). Positions 443–597 (KIDWLIDFLK…TCPMGMALFS (155 aa)) constitute a Helicase C-terminal domain.

This sequence belongs to the SNF2/RAD54 helicase family. RapA subfamily. As to quaternary structure, interacts with the RNAP. Has a higher affinity for the core RNAP than for the holoenzyme. Its ATPase activity is stimulated by binding to RNAP.

Its function is as follows. Transcription regulator that activates transcription by stimulating RNA polymerase (RNAP) recycling in case of stress conditions such as supercoiled DNA or high salt concentrations. Probably acts by releasing the RNAP, when it is trapped or immobilized on tightly supercoiled DNA. Does not activate transcription on linear DNA. Probably not involved in DNA repair. In Haemophilus influenzae (strain ATCC 51907 / DSM 11121 / KW20 / Rd), this protein is RNA polymerase-associated protein RapA.